Here is a 426-residue protein sequence, read N- to C-terminus: Glutamyl-tRNA reductase (426 aa).

Substrate is bound by residues 52–55 (TCNR), Ser110, 115–117 (EYE), and Gln121. Residue Cys53 is the Nucleophile of the active site. An NADP(+)-binding site is contributed by 190-195 (GAGEMG).

This sequence belongs to the glutamyl-tRNA reductase family. In terms of assembly, homodimer.

The catalysed reaction is (S)-4-amino-5-oxopentanoate + tRNA(Glu) + NADP(+) = L-glutamyl-tRNA(Glu) + NADPH + H(+). Its pathway is porphyrin-containing compound metabolism; protoporphyrin-IX biosynthesis; 5-aminolevulinate from L-glutamyl-tRNA(Glu): step 1/2. In terms of biological role, catalyzes the NADPH-dependent reduction of glutamyl-tRNA(Glu) to glutamate 1-semialdehyde (GSA). This Saccharolobus islandicus (strain Y.N.15.51 / Yellowstone #2) (Sulfolobus islandicus) protein is Glutamyl-tRNA reductase.